The chain runs to 102 residues: Heat shock protein HspQ (102 aa).

The protein belongs to the HspQ family.

Its subcellular location is the cytoplasm. Functionally, involved in the degradation of certain denaturated proteins, including DnaA, during heat shock stress. The polypeptide is Heat shock protein HspQ (Pectobacterium atrosepticum (strain SCRI 1043 / ATCC BAA-672) (Erwinia carotovora subsp. atroseptica)).